We begin with the raw amino-acid sequence, 126 residues long: Protein VraC (126 aa).

This chain is Protein VraC, found in Staphylococcus haemolyticus (strain JCSC1435).